The following is a 187-amino-acid chain: Adenylate kinase (187 aa).

10–15 (GSGKGT) lines the ATP pocket. The segment at 30-59 (STGDLLRAEVAAGSPLGLKAKEVMARGDLV) is NMP. Residues T31, R36, 57 to 59 (DLV), 85 to 88 (GYPR), and Q92 each bind AMP. Residues 126-136 (GRAKAEGREDD) form an LID region. R127 provides a ligand contact to ATP. 2 residues coordinate AMP: R133 and R144. G172 lines the ATP pocket.

The protein belongs to the adenylate kinase family. As to quaternary structure, monomer.

It localises to the cytoplasm. It carries out the reaction AMP + ATP = 2 ADP. The protein operates within purine metabolism; AMP biosynthesis via salvage pathway; AMP from ADP: step 1/1. Its function is as follows. Catalyzes the reversible transfer of the terminal phosphate group between ATP and AMP. Plays an important role in cellular energy homeostasis and in adenine nucleotide metabolism. In Xanthomonas campestris pv. campestris (strain 8004), this protein is Adenylate kinase.